We begin with the raw amino-acid sequence, 186 residues long: Putative 3-methyladenine DNA glycosylase (186 aa).

It belongs to the DNA glycosylase MPG family.

The sequence is that of Putative 3-methyladenine DNA glycosylase from Borreliella burgdorferi (strain ATCC 35210 / DSM 4680 / CIP 102532 / B31) (Borrelia burgdorferi).